The chain runs to 830 residues: G-type lectin S-receptor-like serine/threonine-protein kinase SD1-13 (830 aa).

The N-terminal stretch at 1-21 (MGCLLILLLTLICFSLRLCLA) is a signal peptide. The Bulb-type lectin domain occupies 22–145 (TDVITFSSEF…TNTGDEILWE (124 aa)). At 22-434 (TDVITFSSEF…SEFKKRTNRS (413 aa)) the chain is on the extracellular side. Residues Asn-40, Asn-53, and Asn-82 are each glycosylated (N-linked (GlcNAc...) asparagine). An EGF-like; atypical domain is found at 283 to 321 (PSTKCDTYATCGQFASCRFNPGSTPPCMCIRGFKPQSYA). 2 disulfides stabilise this stretch: Cys-287-Cys-299 and Cys-293-Cys-309. N-linked (GlcNAc...) asparagine glycans are attached at residues Asn-327, Asn-384, and Asn-432. A PAN domain is found at 340 to 423 (CESRDNNDGS…TGVVFYIRLA (84 aa)). Disulfide bonds link Cys-377–Cys-398 and Cys-381–Cys-387. Residues 435 to 455 (IVITVTLLVGAFLFAGTVVLA) form a helical membrane-spanning segment. Over 456 to 830 (LWKIAKHREK…NVSLTKITGR (375 aa)) the chain is Cytoplasmic. Positions 512–798 (FSITNKLGQG…NLPEPKQPAF (287 aa)) constitute a Protein kinase domain. Residues 518-526 (LGQGGFGAV) and Lys-540 each bind ATP. At Thr-545 the chain carries Phosphothreonine. A phosphoserine mark is found at Ser-546 and Ser-561. A caM-binding region spans residues 601-618 (VKQRLLDWKTRFNIIDGI). The Proton acceptor role is filled by Asp-637. Ser-641, Ser-654, and Ser-670 each carry phosphoserine. Thr-671 is subject to Phosphothreonine. Ser-714, Ser-715, Ser-726, Ser-805, Ser-809, Ser-810, Ser-813, Ser-818, and Ser-823 each carry phosphoserine. A disordered region spans residues 789–830 (NLPEPKQPAFIPRRGTSEVESSGQSDPRASINNVSLTKITGR). The segment covering 806–830 (EVESSGQSDPRASINNVSLTKITGR) has biased composition (polar residues). Thr-825 and Thr-828 each carry phosphothreonine.

Belongs to the protein kinase superfamily. Ser/Thr protein kinase family. Interacts with PUB9, PUB13 and PUB14. Binds to calmodulin (CaM) in a Ca(2+)-dependent manner. Autophosphorylated. In terms of tissue distribution, mostly expressed in rosette leaves, and, to a lower extent, in cauline leaves and stems.

It localises to the cell membrane. The catalysed reaction is L-seryl-[protein] + ATP = O-phospho-L-seryl-[protein] + ADP + H(+). The enzyme catalyses L-threonyl-[protein] + ATP = O-phospho-L-threonyl-[protein] + ADP + H(+). In terms of biological role, receptor-like serine/threonine-protein kinase that represses the disease resistance signaling pathway triggered in response to bacterial pathogen such as Pseudomonas syringae pv. tomato. This is G-type lectin S-receptor-like serine/threonine-protein kinase SD1-13 (SD113) from Arabidopsis thaliana (Mouse-ear cress).